The following is a 256-amino-acid chain: Isoprenyl transferase (256 aa).

The active site involves Asp33. Asp33 serves as a coordination point for Mg(2+). Substrate-binding positions include 34–37 (GNGR), Trp38, Arg46, His50, and 78–80 (STE). Catalysis depends on Asn81, which acts as the Proton acceptor. Substrate contacts are provided by residues Trp82, Arg84, Arg201, and 207 to 209 (RIS). Glu220 contacts Mg(2+).

The protein belongs to the UPP synthase family. In terms of assembly, homodimer. Mg(2+) is required as a cofactor.

In terms of biological role, catalyzes the condensation of isopentenyl diphosphate (IPP) with allylic pyrophosphates generating different type of terpenoids. This chain is Isoprenyl transferase, found in Staphylococcus aureus (strain COL).